The following is a 448-amino-acid chain: NADP-specific glutamate dehydrogenase (448 aa).

Lys-88, Gln-109, and Lys-112 together coordinate substrate. The Proton donor role is filled by Lys-124. Gly-163 contributes to the substrate binding site. Thr-207 and Asn-238 together coordinate NADP(+). Residue Ser-381 participates in substrate binding.

The protein belongs to the Glu/Leu/Phe/Val dehydrogenases family. As to quaternary structure, homohexamer.

The catalysed reaction is L-glutamate + NADP(+) + H2O = 2-oxoglutarate + NH4(+) + NADPH + H(+). Its function is as follows. Catalyzes the reversible oxidative deamination of glutamate to alpha-ketoglutarate and ammonia. The chain is NADP-specific glutamate dehydrogenase (gdhA) from Helicobacter pylori (strain ATCC 700392 / 26695) (Campylobacter pylori).